The sequence spans 142 residues: Hemoglobin subunit alpha-3 (142 aa).

A Globin domain is found at 2–142; sequence VLSAADKSNV…VSTVLTSKYR (141 aa). His-59 is an O2 binding site. His-88 is a binding site for heme b.

The protein belongs to the globin family. Heterotetramer of two alpha chains and two beta chains. As to expression, red blood cells.

In terms of biological role, involved in oxygen transport from the lung to the various peripheral tissues. The chain is Hemoglobin subunit alpha-3 from Bubalus bubalis (Domestic water buffalo).